A 69-amino-acid chain; its full sequence is Probable Sec-independent protein translocase protein TatE (69 aa).

Residues 1-21 form a helical membrane-spanning segment; sequence MEGISIAKLLVIGALIVLLFG. Positions 45 to 69 are disordered; sequence DDQPAAKSSAQDEHPAAISETRPKE. The segment covering 54–69 has biased composition (basic and acidic residues); that stretch reads AQDEHPAAISETRPKE.

Belongs to the TatA/E family. TatE subfamily.

The protein resides in the cell inner membrane. In terms of biological role, part of the twin-arginine translocation (Tat) system that transports large folded proteins containing a characteristic twin-arginine motif in their signal peptide across membranes. TatE shares overlapping functions with TatA. This is Probable Sec-independent protein translocase protein TatE from Dickeya chrysanthemi (strain Ech1591) (Dickeya zeae (strain Ech1591)).